Reading from the N-terminus, the 333-residue chain is MKKRHLLIAGLACMTILGACNNDDAGSSGQAVVEVDGHEISDAEFVDMLKERYGEAILQELVQRHLISQAADSVEIPQEEIDEELETFKSQIGVETDDEMLDALSNQFGITVENKEEFVNEYILPPLVLEKLAVEGVEITDEEKQAYFDENRDSLIEVEASHILVEDEETAEEVLDRLEAGDDFAELASEYSVDPSAEANNGDLGFFGKGDMVPEFEEAAFNMEIDEVSEPVESTYGYHIILVTDRKDSYEELEEKIHDTLMRERSRTQEEVLRDLLAQADINVLDDQFEGLFDLPDAPPVEDTPEIDGEDASDEAEDQAEDADENAEEEDES.

Residues methionine 1–alanine 19 form the signal peptide. Residue cysteine 20 is the site of N-palmitoyl cysteine attachment. The S-diacylglycerol cysteine moiety is linked to residue cysteine 20. Positions leucine 155–aspartate 245 constitute a PpiC domain. Residues glycine 291 to serine 333 are disordered. Over residues aspartate 303 to serine 333 the composition is skewed to acidic residues.

This sequence belongs to the PrsA family.

It localises to the cell membrane. The catalysed reaction is [protein]-peptidylproline (omega=180) = [protein]-peptidylproline (omega=0). Functionally, plays a major role in protein secretion by helping the post-translocational extracellular folding of several secreted proteins. In Halalkalibacterium halodurans (strain ATCC BAA-125 / DSM 18197 / FERM 7344 / JCM 9153 / C-125) (Bacillus halodurans), this protein is Foldase protein PrsA.